Consider the following 356-residue polypeptide: 1,2-phenylacetyl-CoA epoxidase, subunit E (356 aa).

The 105-residue stretch at Thr2 to Gln106 folds into the FAD-binding FR-type domain. Positions Gln112–Ala228 are oxidoreductase. The region spanning Gln262–Gly354 is the 2Fe-2S ferredoxin-type domain. [2Fe-2S] cluster is bound by residues Cys299, Cys304, Cys307, and Cys337.

In the N-terminal section; belongs to the FAD-binding oxidoreductase type 6 family. Requires [2Fe-2S] cluster as cofactor. The cofactor is FAD.

It participates in aromatic compound metabolism; phenylacetate degradation. In terms of biological role, component of 1,2-phenylacetyl-CoA epoxidase multicomponent enzyme system which catalyzes the reduction of phenylacetyl-CoA (PA-CoA) to form 1,2-epoxyphenylacetyl-CoA. The subunit E is a reductase with a preference for NADPH and FAD, capable of reducing cytochrome c. The chain is 1,2-phenylacetyl-CoA epoxidase, subunit E (paaE) from Escherichia coli (strain K12).